Here is a 545-residue protein sequence, read N- to C-terminus: Hydroxylamine reductase (545 aa).

Residues C3, C6, C15, and C21 each coordinate [4Fe-4S] cluster. Hybrid [4Fe-2O-2S] cluster is bound by residues H241, E265, C309, C396, C424, C449, E483, and K485. C396 carries the cysteine persulfide modification.

It belongs to the HCP family. [4Fe-4S] cluster is required as a cofactor. Hybrid [4Fe-2O-2S] cluster serves as cofactor.

The protein localises to the cytoplasm. The enzyme catalyses A + NH4(+) + H2O = hydroxylamine + AH2 + H(+). Its function is as follows. Catalyzes the reduction of hydroxylamine to form NH(3) and H(2)O. In Zymomonas mobilis subsp. mobilis (strain ATCC 31821 / ZM4 / CP4), this protein is Hydroxylamine reductase.